Reading from the N-terminus, the 128-residue chain is Large ribosomal subunit protein bL17 (128 aa).

The protein belongs to the bacterial ribosomal protein bL17 family. Part of the 50S ribosomal subunit. Contacts protein L32.

This is Large ribosomal subunit protein bL17 from Pseudomonas fluorescens (strain ATCC BAA-477 / NRRL B-23932 / Pf-5).